The primary structure comprises 452 residues: Tubulin alpha-2/alpha-4 chain (452 aa).

Glutamine 11 lines the GTP pocket. Lysine 40 is subject to N6-acetyllysine. Glutamate 71, serine 140, glycine 144, threonine 145, threonine 179, asparagine 206, and asparagine 228 together coordinate GTP. Position 71 (glutamate 71) interacts with Mg(2+). Glutamate 254 is an active-site residue. A disordered region spans residues 432–452; sequence YEEVGVDSVEGEGEEEGGEEY.

It belongs to the tubulin family. As to quaternary structure, dimer of alpha and beta chains. A typical microtubule is a hollow water-filled tube with an outer diameter of 25 nm and an inner diameter of 15 nM. Alpha-beta heterodimers associate head-to-tail to form protofilaments running lengthwise along the microtubule wall with the beta-tubulin subunit facing the microtubule plus end conferring a structural polarity. Microtubules usually have 13 protofilaments but different protofilament numbers can be found in some organisms and specialized cells. Mg(2+) is required as a cofactor. Undergoes a tyrosination/detyrosination cycle, the cyclic removal and re-addition of a C-terminal tyrosine residue by the enzymes tubulin tyrosine carboxypeptidase (TTCP) and tubulin tyrosine ligase (TTL), respectively. Post-translationally, acetylation of alpha chains at Lys-40 stabilizes microtubules and affects affinity and processivity of microtubule motors. This modification has a role in multiple cellular functions, ranging from cell motility, cell cycle progression or cell differentiation to intracellular trafficking and signaling.

It is found in the cytoplasm. The protein localises to the cytoskeleton. The enzyme catalyses GTP + H2O = GDP + phosphate + H(+). Its function is as follows. Tubulin is the major constituent of microtubules, a cylinder consisting of laterally associated linear protofilaments composed of alpha- and beta-tubulin heterodimers. Microtubules grow by the addition of GTP-tubulin dimers to the microtubule end, where a stabilizing cap forms. Below the cap, tubulin dimers are in GDP-bound state, owing to GTPase activity of alpha-tubulin. In Patella vulgata (Common limpet), this protein is Tubulin alpha-2/alpha-4 chain (TUB2).